Consider the following 274-residue polypeptide: Large ribosomal subunit protein uL2cz/uL2cy (274 aa).

2 disordered regions span residues 1 to 22 and 225 to 252; these read MAIH…DSQV and PVDH…GYPA.

Belongs to the universal ribosomal protein uL2 family. As to quaternary structure, part of the 50S ribosomal subunit.

The protein localises to the plastid. It localises to the chloroplast. The sequence is that of Large ribosomal subunit protein uL2cz/uL2cy (rpl2-A) from Barbarea verna (Land cress).